A 285-amino-acid polypeptide reads, in one-letter code: Eukaryotic translation initiation factor 3 subunit F-2 (285 aa).

The region spanning 11 to 145 (VLIKPLVLFQ…TRLYCAVEIG (135 aa)) is the MPN domain.

Belongs to the eIF-3 subunit F family. As to quaternary structure, component of the eukaryotic translation initiation factor 3 (eIF-3) complex. The eIF-3 complex interacts with pix.

The protein resides in the cytoplasm. Component of the eukaryotic translation initiation factor 3 (eIF-3) complex, which is involved in protein synthesis of a specialized repertoire of mRNAs and, together with other initiation factors, stimulates binding of mRNA and methionyl-tRNAi to the 40S ribosome. The eIF-3 complex specifically targets and initiates translation of a subset of mRNAs involved in cell proliferation. The sequence is that of Eukaryotic translation initiation factor 3 subunit F-2 from Drosophila erecta (Fruit fly).